Here is a 68-residue protein sequence, read N- to C-terminus: Copper transport protein ATOX1 (68 aa).

The region spanning 1–63 is the HMA domain; sequence MPKHEFSVDM…TLNKTGKAVS (63 aa). Cu cation is bound by residues C12 and C15. S47 carries the post-translational modification Phosphoserine. The residue at position 60 (K60) is an N6-acetyllysine.

The protein belongs to the ATX1 family. Homodimer. Interacts with ATP7B. Interacts with ATP7A. Interacts (via dimer form) with SLC31A1 (via C-terminal domain); this interaction improves ATOX1 stability and controls intracellular Cu(I) levels.

In terms of biological role, binds and deliver cytosolic copper to the copper ATPase proteins. May be important in cellular antioxidant defense. The chain is Copper transport protein ATOX1 from Rattus norvegicus (Rat).